Reading from the N-terminus, the 231-residue chain is Glutathione-specific gamma-glutamylcyclotransferase (231 aa).

49-54 (IFGYGS) contacts substrate. The active-site Proton acceptor is Glu-127.

Belongs to the gamma-glutamylcyclotransferase family. ChaC subfamily.

It catalyses the reaction glutathione = L-cysteinylglycine + 5-oxo-L-proline. Its function is as follows. Catalyzes the cleavage of glutathione into 5-oxo-L-proline and a Cys-Gly dipeptide. Acts specifically on glutathione, but not on other gamma-glutamyl peptides. The polypeptide is Glutathione-specific gamma-glutamylcyclotransferase (Escherichia coli (strain K12)).